A 438-amino-acid chain; its full sequence is MSDGTLFIQDSRTSKQYTISVTSDTITAVDFQKITSPTGKLALYDPGLQNTIIKKTQITGRDPVTGITLFRGLSAKEIWNRHADFEDHFHLLVFGKYPSPEESEALRRRLAVQMTVVPETVIKAVQAFPRTSHPLPMIIAGLAAFISADPSSLPAIRGGNIYHGNRALCDEGVIRATAAYAVVMGLINSHRKQLPYVPADPQKSFYENVFAMMRCPVHHNYLVTFREGMVLNSDNGMTQSSVVLLSTASSLPDPISCLISAITAAYGPLHYGAQEAGSTTLKSIGSLDKVPEFLEQVKRRERRLFGFGHRLHKREDPRLASVKRWLKMMDYTPDQEPLLELAQEIDRLASSDEYFIKRNLRANADFYTHFLFKAWGFDWDMLCAANMFHRIIGLMAHWREAMDQPIKIFRATDLYVGPVVIQEDNRTVLEEPKIQSRL.

Catalysis depends on residues H309 and D365.

Belongs to the citrate synthase family.

It catalyses the reaction (2E,10E)-dode-2,10-dicenoyl-CoA + oxaloacetate + H2O = (4E,11E)-2-hydroxytrideca-4,11-dien-1,2,3-tricarboxylate + CoA + H(+). The protein operates within secondary metabolite biosynthesis. Functionally, alkylcitrate synthase; part of the gene cluster that mediates the biosynthesis of the antihypercholesterolemic agents phomoidrides which are dimeric anhydrides. Within the pathway, the alkylcitrate synthase (ACS) tstJ and the alkylcitrate dehydratase (ACDH) tstI produce the decarboxylated monomeric anhydrides by coupling the C12-fatty acyl product from phiA with oxalacetic acid. The pathway begins with the highly reducing polyketide synthase tstA that catalyzes the formation of a C12-fatty acyl-ACP, starting from one acetate and 5 malonate units. The hydrolase tstM is involved in the release of the C12-fatty acyl chain from phiA. The alkylcitrate synthase (ACS) tstJ and the alkylcitrate dehydratase (ACDH) tstI then give rise to decarboxylated monomeric anhydrides by coupling the C12-fatty acyl chain with oxalacetic acid. The cyclase tstC is responsible for the dimerization of the monomeric anhydrides which leads to the production of prephomoidride that contains the characteristic bicyclo[4.3.1]deca-1,6-diene system of phomoidrides. Iterative oxidation catalyzed by the alpha-ketoglutarate-dependent dioxygenase tstK produced then phomoidride A. Finally, the methyltransferase tstE converts phomoidride A to phomoidride B via an acetalization reaction. The phosphatidylethanolamine-binding protein tstB and tstN are not essential for dimerization and their functions have still to be determined. This is Alkylcitrate synthase tstJ from Talaromyces stipitatus (strain ATCC 10500 / CBS 375.48 / QM 6759 / NRRL 1006) (Penicillium stipitatum).